Consider the following 688-residue polypeptide: Methionine--tRNA ligase (688 aa).

A 'HIGH' region motif is present at residues 13-23 (PYANGNFHIGH). Residues Cys144, Cys147, Cys157, and Cys160 each coordinate Zn(2+). Positions 342-346 (KMSKS) match the 'KMSKS' region motif. Lys345 is a binding site for ATP. The 107-residue stretch at 582 to 688 (DFAKVDLRIA…PGAQPGMRIH (107 aa)) folds into the tRNA-binding domain.

This sequence belongs to the class-I aminoacyl-tRNA synthetase family. MetG type 1 subfamily. Homodimer. The cofactor is Zn(2+).

The protein resides in the cytoplasm. It catalyses the reaction tRNA(Met) + L-methionine + ATP = L-methionyl-tRNA(Met) + AMP + diphosphate. Functionally, is required not only for elongation of protein synthesis but also for the initiation of all mRNA translation through initiator tRNA(fMet) aminoacylation. This Acidovorax sp. (strain JS42) protein is Methionine--tRNA ligase.